A 345-amino-acid chain; its full sequence is Dihydroorotate dehydrogenase (quinone) (345 aa).

Residues 65 to 69 (AGLDK) and threonine 89 contribute to the FMN site. Position 69 (lysine 69) interacts with substrate. 114–118 (NRMGF) is a binding site for substrate. Positions 142 and 175 each coordinate FMN. Asparagine 175 lines the substrate pocket. Residue serine 178 is the Nucleophile of the active site. Asparagine 180 provides a ligand contact to substrate. The FMN site is built by lysine 220 and threonine 248. 249–250 (NT) contributes to the substrate binding site. Residues glycine 271, glycine 300, and 321–322 (YT) each bind FMN.

This sequence belongs to the dihydroorotate dehydrogenase family. Type 2 subfamily. In terms of assembly, monomer. Requires FMN as cofactor.

It is found in the cell membrane. The enzyme catalyses (S)-dihydroorotate + a quinone = orotate + a quinol. Its pathway is pyrimidine metabolism; UMP biosynthesis via de novo pathway; orotate from (S)-dihydroorotate (quinone route): step 1/1. Functionally, catalyzes the conversion of dihydroorotate to orotate with quinone as electron acceptor. In Burkholderia cenocepacia (strain ATCC BAA-245 / DSM 16553 / LMG 16656 / NCTC 13227 / J2315 / CF5610) (Burkholderia cepacia (strain J2315)), this protein is Dihydroorotate dehydrogenase (quinone).